Reading from the N-terminus, the 560-residue chain is Nuclear receptor subfamily 5 group A member 2 (560 aa).

Residues 21 to 55 form a disordered region; sequence IASAPGSETRHSPKREEQLREKRAGLPDRHRRPIP. A compositionally biased stretch (basic and acidic residues) spans 28 to 48; sequence ETRHSPKREEQLREKRAGLPD. A DNA-binding region (nuclear receptor) is located at residues 104 to 175; the sequence is EELCPVCGDK…KCIDVGMKLE (72 aa). 8 residues coordinate Zn(2+): Cys107, Cys110, Cys124, Cys127, Cys143, Cys149, Cys159, and Cys162. 2 NR C4-type zinc fingers span residues 107 to 127 and 143 to 167; these read CPVC…CESC and CIEN…FKKC. Residues 173–188 form a C-terminal extension (CTE) region; the sequence is KLEAVRADRMRGGRNK. The FTZ-F1 box motif lies at 189–208; that stretch reads FGPMYKRDRALKQQKKALIR. Residue Lys289 forms a Glycyl lysine isopeptide (Lys-Gly) (interchain with G-Cter in SUMO1) linkage. The region spanning 319–558 is the NR LBD domain; sequence SIPHLILELL…NLLIEMLHAK (240 aa). Tyr535 and Lys539 together coordinate a phospholipid derivative. The tract at residues 547–558 is AF-2; the sequence is YNNLLIEMLHAK.

This sequence belongs to the nuclear hormone receptor family. NR5 subfamily. In terms of assembly, monomer; Binds DNA as a monomer. Interacts with nuclear receptor corepressors NR0B1 and NR0B2; repressing NR5A2 nuclear receptor activity. Interacts with nuclear receptor coactivators CTNNB1, PPARGC1A and NCOA2; interaction takes place following ligand-binding and promotes target gene activation. Interacts (when sumoylated) with GPS2; interaction with GPS2 onto hepatic acute phase protein promoters prevents N-Cor corepressor complex dissociation. Interacts with HNF1A. Interacts with GRIP1. Sumoylated by SUMO1 at Lys-289 during the hepatic acute phase response, leading to promote interaction with GPS2 and prevent N-Cor corepressor complex dissociation.

It is found in the nucleus. It localises to the chromosome. Its function is as follows. Orphan nuclear receptor that binds DNA as a monomer to the 5'-TCAAGGCCA-3' sequence and controls expression of target genes: regulates key biological processes, such as early embryonic development, cholesterol and bile acid synthesis pathways, as well as liver and pancreas morphogenesis. Ligand-binding causes conformational change which causes recruitment of coactivators, promoting target gene activation. The specific ligand is unknown, but specific phospholipids, such as phosphatidylethanolamine, phosphatidylserine, dilauroyl phosphatidylcholine and diundecanoyl phosphatidylcholine can act as ligand in vitro. Acts as a pioneer transcription factor, which unwraps target DNA from histones and elicits local opening of closed chromatin. Plays a central role during preimplantation stages of embryonic development. Plays a minor role in zygotic genome activation (ZGA) by regulating a small set of two-cell stage genes. Plays a major role in morula development (2-16 cells embryos) by acting as a master regulator at the 8-cell stage, controlling expression of lineage-specifying transcription factors and genes involved in mitosis, telomere maintenance and DNA repair. Zygotic NR5A2 binds to both closed and open chromatin with other transcription factors, often at SINE B1/Alu repeats DNA elements, promoting chromatin accessibility at nearby regulatory regions. Also involved in the epiblast stage of development and embryonic stem cell pluripotency, by promoting expression of POU5F1/OCT4. Regulates other processes later in development, such as formation of connective tissue in lower jaw and middle ear, neural stem cell differentiation, ovarian follicle development and Sertoli cell differentiation. Involved in exocrine pancreas development and acinar cell differentiation. Acts as an essential transcriptional regulator of lipid metabolism. Key regulator of cholesterol 7-alpha-hydroxylase gene (CYP7A) expression in liver. Activates the transcription of CYP2C38. Also acts as a negative regulator of inflammation in different organs, such as intestine, liver and pancreas. Protects against intestinal inflammation via its ability to regulate glucocorticoid production. Plays an anti-inflammatory role during the hepatic acute phase response by acting as a corepressor: inhibits the hepatic acute phase response by preventing dissociation of the N-Cor corepressor complex. Acts as a regulator of immunity by promoting lymphocyte T-cell development, proliferation and effector functions. Also involved in resolution of endoplasmic reticulum stress in the liver. This Mus musculus (Mouse) protein is Nuclear receptor subfamily 5 group A member 2.